Reading from the N-terminus, the 414-residue chain is GPI mannosyltransferase 1 (414 aa).

10 consecutive transmembrane segments (helical) span residues 6-26 (ISHI…FGLY), 87-107 (YIFM…LSGI), 119-139 (IIML…STRG), 149-171 (IMLS…WLGL), 183-203 (LPSI…VPIV), 213-233 (FLIT…SIYG), 282-302 (MEKF…PLLF), 316-336 (FAFV…FLIF), 356-376 (IVAL…AYQL), and 387-407 (GLLF…SVFI).

Belongs to the PIGM family.

The protein localises to the endoplasmic reticulum membrane. It functions in the pathway glycolipid biosynthesis; glycosylphosphatidylinositol-anchor biosynthesis. Mannosyltransferase involved in glycosylphosphatidylinositol-anchor biosynthesis. Transfers the first alpha-1,4-mannose to GlcN-acyl-PI during GPI precursor assembly. Required for cell wall integrity. This chain is GPI mannosyltransferase 1 (GPI14), found in Debaryomyces hansenii (strain ATCC 36239 / CBS 767 / BCRC 21394 / JCM 1990 / NBRC 0083 / IGC 2968) (Yeast).